A 348-amino-acid polypeptide reads, in one-letter code: Dihydroorotase (348 aa).

Residues histidine 17 and histidine 19 each coordinate Zn(2+). Substrate-binding positions include 19 to 21 (HLR) and asparagine 45. Lysine 103, histidine 140, and histidine 178 together coordinate Zn(2+). Lysine 103 bears the N6-carboxylysine mark. Position 140 (histidine 140) interacts with substrate. Leucine 223 contributes to the substrate binding site. Residue aspartate 251 coordinates Zn(2+). The active site involves aspartate 251. Residues histidine 255 and alanine 267 each contribute to the substrate site.

It belongs to the metallo-dependent hydrolases superfamily. DHOase family. Class II DHOase subfamily. In terms of assembly, homodimer. The cofactor is Zn(2+).

It carries out the reaction (S)-dihydroorotate + H2O = N-carbamoyl-L-aspartate + H(+). The protein operates within pyrimidine metabolism; UMP biosynthesis via de novo pathway; (S)-dihydroorotate from bicarbonate: step 3/3. Functionally, catalyzes the reversible cyclization of carbamoyl aspartate to dihydroorotate. The sequence is that of Dihydroorotase from Shigella boydii serotype 18 (strain CDC 3083-94 / BS512).